A 370-amino-acid polypeptide reads, in one-letter code: Protein Brevis radix-like 3 (370 aa).

The BRX 1 domain occupies 140–221 (KEWVAQVEPG…NFEKVMELYN (82 aa)). Polar residues-rich tracts occupy residues 231 to 248 (LQTP…QSVK) and 266 to 291 (PGSS…SSID). Residues 231 to 316 (LQTPPVSEDG…VSNASDMESE (86 aa)) are disordered. Residues 315 to 370 (SEWVEQDEPGIYITIRALPDGNRELRRVRFSRDKFGETHARLWWEQNRARIQQQYL) form the BRX 2 domain.

The protein belongs to the BRX family. In terms of tissue distribution, expressed in roots.

It is found in the nucleus. The protein is Protein Brevis radix-like 3 (BRXL3) of Arabidopsis thaliana (Mouse-ear cress).